The primary structure comprises 417 residues: 26S proteasome regulatory subunit RPN14 (417 aa).

6 WD repeats span residues 134–173, 176–215, 242–281, 285–325, 330–371, and 380–416; these read AHVS…NPRT, GHRA…TIHT, ISTS…QTIQ, KFTC…CPVG, NEGT…PAIE, and SNDD…NLSN.

The protein belongs to the WD repeat PAAF1/RPN14 family. In terms of assembly, associates with the 19S proteasome regulatory particle (RP). Interacts directly with RPT5 and RPT6.

Its subcellular location is the cytoplasm. The protein localises to the nucleus. Its function is as follows. Acts as a regulatory subunit of the 26 proteasome which is involved in the ATP-dependent degradation of ubiquitinated proteins. Is not a genuine component of the 26S proteasome, but an auxiliary factor that interacts with the proteasomal ATPase of 19S regulatory particle (RP). Acts as a chaperone which regulates the highly structured assembly of the 19S regulatory particle. Involved in the substrate specificity of the 26S proteasome and is especially involved in the degradation of ubiquitinated GCN4. May contribute to the stability of the 26S proteasome in some stress conditions. The sequence is that of 26S proteasome regulatory subunit RPN14 (RPN14) from Saccharomyces cerevisiae (strain ATCC 204508 / S288c) (Baker's yeast).